The primary structure comprises 94 residues: DNA gyrase subunit A (94 aa).

The Topo IIA-type catalytic domain occupies 35 to 94 (LPDVRDGLKPVHRRILYGLNEQGMTPDKPYKKSARIVGDVMGKYHPHGDSSIYEAMVRMA).

The protein belongs to the type II topoisomerase GyrA/ParC subunit family. As to quaternary structure, heterotetramer, composed of two GyrA and two GyrB chains. In the heterotetramer, GyrA contains the active site tyrosine that forms a transient covalent intermediate with DNA, while GyrB binds cofactors and catalyzes ATP hydrolysis.

The protein localises to the cytoplasm. The catalysed reaction is ATP-dependent breakage, passage and rejoining of double-stranded DNA.. Its function is as follows. A type II topoisomerase that negatively supercoils closed circular double-stranded (ds) DNA in an ATP-dependent manner to modulate DNA topology and maintain chromosomes in an underwound state. Negative supercoiling favors strand separation, and DNA replication, transcription, recombination and repair, all of which involve strand separation. Also able to catalyze the interconversion of other topological isomers of dsDNA rings, including catenanes and knotted rings. Type II topoisomerases break and join 2 DNA strands simultaneously in an ATP-dependent manner. The polypeptide is DNA gyrase subunit A (Staphylococcus epidermidis).